A 186-amino-acid chain; its full sequence is uncharacterized protein (186 aa).

A run of 3 helical transmembrane segments spans residues 42 to 62, 80 to 100, and 131 to 151; these read ISIA…LSVL, LLFL…IGLV, and ICGI…FIVL.

The protein to U.parvum UU008, UU041 and UU042.

It is found in the cell membrane. This is an uncharacterized protein from Ureaplasma parvum serovar 3 (strain ATCC 700970).